We begin with the raw amino-acid sequence, 37 residues long: Esculentin-2Ra (37 aa).

A disulfide bridge links C31 with C37.

As to expression, expressed by the skin glands.

The protein resides in the secreted. In terms of biological role, antimicrobial peptide. The protein is Esculentin-2Ra of Pelophylax ridibundus (Marsh frog).